The primary structure comprises 417 residues: Secernin-3 (417 aa).

The propeptide occupies 1–5; that stretch reads MYPRS. Residue C6 is part of the active site. A Glyoxylic acid (Cys); alternate modification is found at C6. C6 carries the pyruvic acid (Cys); alternate modification.

It belongs to the peptidase C69 family. Secernin subfamily.

Plays a role in thermal nociception. The protein is Secernin-3 (scrn3) of Danio rerio (Zebrafish).